Reading from the N-terminus, the 158-residue chain is SsrA-binding protein (158 aa).

Belongs to the SmpB family.

It localises to the cytoplasm. In terms of biological role, required for rescue of stalled ribosomes mediated by trans-translation. Binds to transfer-messenger RNA (tmRNA), required for stable association of tmRNA with ribosomes. tmRNA and SmpB together mimic tRNA shape, replacing the anticodon stem-loop with SmpB. tmRNA is encoded by the ssrA gene; the 2 termini fold to resemble tRNA(Ala) and it encodes a 'tag peptide', a short internal open reading frame. During trans-translation Ala-aminoacylated tmRNA acts like a tRNA, entering the A-site of stalled ribosomes, displacing the stalled mRNA. The ribosome then switches to translate the ORF on the tmRNA; the nascent peptide is terminated with the 'tag peptide' encoded by the tmRNA and targeted for degradation. The ribosome is freed to recommence translation, which seems to be the essential function of trans-translation. The protein is SsrA-binding protein of Bartonella henselae (strain ATCC 49882 / DSM 28221 / CCUG 30454 / Houston 1) (Rochalimaea henselae).